The following is a 360-amino-acid chain: Coiled-coil domain-containing protein 86 (360 aa).

Basic residues predominate over residues 1-12 (MDTPLRRSRRLG). Disordered stretches follow at residues 1–314 (MDTP…ENER) and 328–360 (LKRAKKKQLRSIEKRDTLALLQKQPPQRPAAKI). Residues S21, S24, S47, S50, and S58 each carry the phosphoserine modification. T65 is modified (phosphothreonine). Phosphoserine is present on residues S66, S69, S80, S91, S102, S110, S113, and S128. The span at 66–83 (SPGSPRLQQGSGLESPQG) shows a compositional bias: polar residues. A compositionally biased stretch (pro residues) spans 153-164 (QLPPVPGSPEPY). Phosphoserine is present on residues S188, S217, and S218. Over residues 238–254 (GKPKSGRVWKDRSKKRF) the composition is skewed to basic residues. A coiled-coil region spans residues 272–323 (KERQERKLAKDFARHLEEEKERRRQEKKQRRAENLKRRLENERKAEVVQVIR). Basic and acidic residues-rich tracts occupy residues 273-295 (ERQERKLAKDFARHLEEEKERRR) and 302-314 (RAENLKRRLENER). R342 carries the citrulline modification.

Post-translationally, citrullinated by PADI4.

The protein resides in the nucleus. The protein localises to the chromosome. It is found in the nucleolus. In terms of biological role, required for proper chromosome segregation during mitosis and error-free mitotic progression. This chain is Coiled-coil domain-containing protein 86, found in Pongo abelii (Sumatran orangutan).